The sequence spans 200 residues: NAD(P)H dehydrogenase (quinone) (200 aa).

One can recognise a Flavodoxin-like domain in the interval 4–191 (ILVLYHSLWG…TIARFQGRHV (188 aa)). FMN is bound by residues 10 to 15 (SLWGHV) and 79 to 81 (TRF). Trp-12 contacts NAD(+). Trp-99 contributes to the substrate binding site. FMN is bound by residues 114-120 (STATQHG) and His-135.

This sequence belongs to the WrbA family. It depends on FMN as a cofactor.

It carries out the reaction a quinone + NADH + H(+) = a quinol + NAD(+). The enzyme catalyses a quinone + NADPH + H(+) = a quinol + NADP(+). This Acidithiobacillus ferrooxidans (strain ATCC 53993 / BNL-5-31) (Leptospirillum ferrooxidans (ATCC 53993)) protein is NAD(P)H dehydrogenase (quinone).